We begin with the raw amino-acid sequence, 167 residues long: Phospholipase A2 heteromtoxin (167 aa).

Ca(2+) is bound by residues W38, G40, and G42. Disulfide bonds link C39-C61, C60-C99, C67-C92, C90-C127, and C132-C144. Residue H64 is part of the active site. D65 lines the Ca(2+) pocket. The propeptide occupies 136 to 140 (GRSAR).

The protein belongs to the phospholipase A2 family. Group III subfamily. As to quaternary structure, heterodimer composed of a large and a small subunits; disulfide-linked. Ca(2+) is required as a cofactor. In terms of tissue distribution, expressed by the venom gland.

It is found in the secreted. The catalysed reaction is a 1,2-diacyl-sn-glycero-3-phosphocholine + H2O = a 1-acyl-sn-glycero-3-phosphocholine + a fatty acid + H(+). In terms of biological role, phospholipase toxin, which catalyzes the calcium-dependent hydrolysis of the 2-acyl groups in 3-sn-phosphoglycerides. Inhibits both skeletal (RYR1) and cardiac (RYR2) ryanodine receptors (calcium release channels). Probably blocks ryanodine receptors by generating a lipid product. This is Phospholipase A2 heteromtoxin from Heterometrus laoticus (Thai giant scorpion).